Here is a 1841-residue protein sequence, read N- to C-terminus: Cell division control protein 12 (1841 aa).

2 stretches are compositionally biased toward polar residues: residues 1-25 and 46-63; these read MRNS…TPSA and SIES…QSVT. Disordered regions lie at residues 1–63, 78–134, and 152–181; these read MRNS…QSVT, NSHN…GPRL, and PPVH…RTKH. Residues 232–620 form the GBD/FH3 domain; that stretch reads TRPPSLDQLI…RILLNSKVSN (389 aa). The stretch at 674 to 715 forms a coiled coil; it reads LGAEDLIAKLNKEVEDQKDVILSQKRTNETLKTEIDALQKSH. In terms of domain architecture, FH1 spans 740 to 972; the sequence is GSTNSKERII…VSPAVSNNIS (233 aa). The FH2 domain occupies 980-1391; sequence TGLTRRPTRR…QHRRLNLVNN (412 aa). Residues 1260-1290 are a coiled coil; that stretch reads TEAAKLNIEAIEQECSELIRGCQNLQIDCDS. Disordered regions lie at residues 1445–1661, 1696–1715, and 1735–1758; these read EAPN…ENNL, TTTT…INTI, and KSNK…GSNK. Composition is skewed to polar residues over residues 1447-1456 and 1483-1497; these read PNTSTKSSPA and SEST…NITP. Basic and acidic residues predominate over residues 1499–1516; sequence KKGEVSSKAKKGYNYEKR. Residues 1539–1553 are compositionally biased toward polar residues; the sequence is GRSASYTFSDPSSLE. Serine 1541 carries the post-translational modification Phosphoserine. Tyrosine 1544 is subject to Phosphotyrosine. Residues 1554–1567 are compositionally biased toward basic and acidic residues; the sequence is DSNRQKPFNGEKFR. The segment covering 1568 to 1577 has biased composition (basic residues); sequence RFSSKSRRGS. The segment covering 1594–1604 has biased composition (polar residues); sequence INNNQTSPQNK. The segment covering 1605–1621 has biased composition (basic and acidic residues); sequence PSKESLKSDTISNEKKV. A compositionally biased stretch (polar residues) spans 1630–1641; sequence NLLTPTISNGTR.

This sequence belongs to the formin homology family. BNI1 subfamily. Interacts with profilin and actin at the FH1 and FH2 domains respectively.

Its subcellular location is the nucleus. Functionally, plays a role in the cell cycle. Involved in cytokinesis. Component of the cell division ring. In the absence of profilin, caps the barbed end of actin filaments, thus preventing subunit addition and dissociation. In the presence of profilin, nucleates actin filaments that grow rapidly from their barbed ends. This is Cell division control protein 12 (cdc12) from Schizosaccharomyces pombe (strain 972 / ATCC 24843) (Fission yeast).